Here is a 715-residue protein sequence, read N- to C-terminus: uncharacterized protein (715 aa).

Disordered regions lie at residues 192 to 216 (ASSV…SVTA), 300 to 348 (NEEV…TSKR), 461 to 481 (ASSS…RSNE), and 580 to 630 (FTVS…KPPK). The span at 202–213 (NNTSPYPPSNSS) shows a compositional bias: low complexity. Composition is skewed to polar residues over residues 301-326 (EEVS…NKND) and 472-481 (HLGTSLRSNE). Positions 601 to 614 (TDSSPSDTISSSPT) are enriched in low complexity.

This is an uncharacterized protein from Schizosaccharomyces pombe (strain 972 / ATCC 24843) (Fission yeast).